The sequence spans 540 residues: CTP synthase (540 aa).

The segment at 1–273 (MNNKDLKTKF…DDFILQHFKL (273 aa)) is amidoligase domain. Ser19 lines the CTP pocket. Position 19 (Ser19) interacts with UTP. An ATP-binding site is contributed by 20 to 25 (SLGKGI). Position 60 (Tyr60) interacts with L-glutamine. Asp77 is an ATP binding site. Asp77 and Glu147 together coordinate Mg(2+). CTP is bound by residues 154–156 (DIE), 194–199 (KTKPTQ), and Lys230. Residues 194–199 (KTKPTQ) and Lys230 contribute to the UTP site. The Glutamine amidotransferase type-1 domain maps to 306-539 (YIVLHDAYLS…VEASLLNQKN (234 aa)). Gly361 is an L-glutamine binding site. Cys388 serves as the catalytic Nucleophile; for glutamine hydrolysis. L-glutamine-binding positions include 389 to 392 (LGMQ), Glu412, and Arg466. Catalysis depends on residues His512 and Glu514.

The protein belongs to the CTP synthase family. Homotetramer.

The catalysed reaction is UTP + L-glutamine + ATP + H2O = CTP + L-glutamate + ADP + phosphate + 2 H(+). It catalyses the reaction L-glutamine + H2O = L-glutamate + NH4(+). The enzyme catalyses UTP + NH4(+) + ATP = CTP + ADP + phosphate + 2 H(+). It participates in pyrimidine metabolism; CTP biosynthesis via de novo pathway; CTP from UDP: step 2/2. Its activity is regulated as follows. Allosterically activated by GTP, when glutamine is the substrate; GTP has no effect on the reaction when ammonia is the substrate. The allosteric effector GTP functions by stabilizing the protein conformation that binds the tetrahedral intermediate(s) formed during glutamine hydrolysis. Inhibited by the product CTP, via allosteric rather than competitive inhibition. Its function is as follows. Catalyzes the ATP-dependent amination of UTP to CTP with either L-glutamine or ammonia as the source of nitrogen. Regulates intracellular CTP levels through interactions with the four ribonucleotide triphosphates. The protein is CTP synthase of Onion yellows phytoplasma (strain OY-M).